A 413-amino-acid chain; its full sequence is Serine hydroxymethyltransferase (413 aa).

(6S)-5,6,7,8-tetrahydrofolate contacts are provided by residues Leu-117 and 121–123; that span reads GHL. At Lys-226 the chain carries N6-(pyridoxal phosphate)lysine. Residues Glu-239 and 349 to 351 contribute to the (6S)-5,6,7,8-tetrahydrofolate site; that span reads SPF.

It belongs to the SHMT family. As to quaternary structure, homodimer. The cofactor is pyridoxal 5'-phosphate.

Its subcellular location is the cytoplasm. It catalyses the reaction (6R)-5,10-methylene-5,6,7,8-tetrahydrofolate + glycine + H2O = (6S)-5,6,7,8-tetrahydrofolate + L-serine. It functions in the pathway one-carbon metabolism; tetrahydrofolate interconversion. The protein operates within amino-acid biosynthesis; glycine biosynthesis; glycine from L-serine: step 1/1. Catalyzes the reversible interconversion of serine and glycine with tetrahydrofolate (THF) serving as the one-carbon carrier. This reaction serves as the major source of one-carbon groups required for the biosynthesis of purines, thymidylate, methionine, and other important biomolecules. Also exhibits THF-independent aldolase activity toward beta-hydroxyamino acids, producing glycine and aldehydes, via a retro-aldol mechanism. This is Serine hydroxymethyltransferase from Bacillus cereus (strain AH187).